The chain runs to 1167 residues: Non-toxic nonhemagglutinin (1167 aa).

Residues 1-381 are light chain nLC; the sequence is MDIIDNVDIT…PQQIINLIDN (381 aa). The segment at 382–804 is N-heavy chain nHN; sequence NNILLIKSYI…LFNSKIQLTI (423 aa). Residues 805–1167 are C-heavy chain nHC; it reads KNEKPEYNLL…LNDIYSWTLI (363 aa).

This sequence belongs to the botulism non-toxic nonhemagglutinin family.

Its function is as follows. Expression of the ptox operon (ntnh-orfX1-orfX2-orfX3-pmp1) in B.thuringiensis kills Anopheles but not Aedes mosquito 3rd instar larvae. The ntnh-pmp1 construct is about half as toxic. This chain is Non-toxic nonhemagglutinin, found in Paraclostridium bifermentans (Clostridium bifermentans).